A 342-amino-acid chain; its full sequence is Ferredoxin--NADP reductase (342 aa).

Residues Cys17, Asp36, Gln44, Tyr49, Val89, Phe124, Asp289, and Thr330 each contribute to the FAD site.

The protein belongs to the ferredoxin--NADP reductase type 2 family. In terms of assembly, homodimer. The cofactor is FAD.

The enzyme catalyses 2 reduced [2Fe-2S]-[ferredoxin] + NADP(+) + H(+) = 2 oxidized [2Fe-2S]-[ferredoxin] + NADPH. This Bradyrhizobium sp. (strain ORS 278) protein is Ferredoxin--NADP reductase.